The primary structure comprises 493 residues: uncharacterized protein (493 aa).

A Phosphoserine modification is found at S328. The segment covering 466-486 (AESNSGRGQNSKTKTTSVNLS) has biased composition (polar residues). A disordered region spans residues 466 to 493 (AESNSGRGQNSKTKTTSVNLSRNKRTRT).

This is an uncharacterized protein from Schizosaccharomyces pombe (strain 972 / ATCC 24843) (Fission yeast).